The chain runs to 142 residues: Transcriptional regulator MraZ (142 aa).

SpoVT-AbrB domains lie at 5-47 and 76-119; these read THTP…PTET and ASDT…DATE.

It belongs to the MraZ family. In terms of assembly, forms oligomers.

The protein localises to the cytoplasm. It localises to the nucleoid. The protein is Transcriptional regulator MraZ of Cutibacterium acnes (strain DSM 16379 / KPA171202) (Propionibacterium acnes).